The primary structure comprises 177 residues: Large ribosomal subunit protein uL10 (177 aa).

The protein belongs to the universal ribosomal protein uL10 family. Part of the ribosomal stalk of the 50S ribosomal subunit. The N-terminus interacts with L11 and the large rRNA to form the base of the stalk. The C-terminus forms an elongated spine to which L12 dimers bind in a sequential fashion forming a multimeric L10(L12)X complex.

Functionally, forms part of the ribosomal stalk, playing a central role in the interaction of the ribosome with GTP-bound translation factors. This Mycobacterium leprae (strain Br4923) protein is Large ribosomal subunit protein uL10.